Reading from the N-terminus, the 159-residue chain is SsrA-binding protein (159 aa).

Belongs to the SmpB family.

The protein localises to the cytoplasm. Required for rescue of stalled ribosomes mediated by trans-translation. Binds to transfer-messenger RNA (tmRNA), required for stable association of tmRNA with ribosomes. tmRNA and SmpB together mimic tRNA shape, replacing the anticodon stem-loop with SmpB. tmRNA is encoded by the ssrA gene; the 2 termini fold to resemble tRNA(Ala) and it encodes a 'tag peptide', a short internal open reading frame. During trans-translation Ala-aminoacylated tmRNA acts like a tRNA, entering the A-site of stalled ribosomes, displacing the stalled mRNA. The ribosome then switches to translate the ORF on the tmRNA; the nascent peptide is terminated with the 'tag peptide' encoded by the tmRNA and targeted for degradation. The ribosome is freed to recommence translation, which seems to be the essential function of trans-translation. The protein is SsrA-binding protein of Salinispora tropica (strain ATCC BAA-916 / DSM 44818 / JCM 13857 / NBRC 105044 / CNB-440).